The following is a 243-amino-acid chain: 1-(5-phosphoribosyl)-5-[(5-phosphoribosylamino)methylideneamino] imidazole-4-carboxamide isomerase (243 aa).

The active-site Proton acceptor is D8. D129 acts as the Proton donor in catalysis.

The protein belongs to the HisA/HisF family.

It localises to the cytoplasm. It catalyses the reaction 1-(5-phospho-beta-D-ribosyl)-5-[(5-phospho-beta-D-ribosylamino)methylideneamino]imidazole-4-carboxamide = 5-[(5-phospho-1-deoxy-D-ribulos-1-ylimino)methylamino]-1-(5-phospho-beta-D-ribosyl)imidazole-4-carboxamide. It participates in amino-acid biosynthesis; L-histidine biosynthesis; L-histidine from 5-phospho-alpha-D-ribose 1-diphosphate: step 4/9. The polypeptide is 1-(5-phosphoribosyl)-5-[(5-phosphoribosylamino)methylideneamino] imidazole-4-carboxamide isomerase (Brucella suis biovar 1 (strain 1330)).